We begin with the raw amino-acid sequence, 93 residues long: Putative septation protein SpoVG (93 aa).

This sequence belongs to the SpoVG family.

Functionally, could be involved in septation. The chain is Putative septation protein SpoVG from Treponema denticola (strain ATCC 35405 / DSM 14222 / CIP 103919 / JCM 8153 / KCTC 15104).